The chain runs to 277 residues: Putative phosphoenolpyruvate synthase regulatory protein (277 aa).

157–164 contacts ADP; that stretch reads GVSRCGKT.

The protein belongs to the pyruvate, phosphate/water dikinase regulatory protein family. PSRP subfamily.

The enzyme catalyses [pyruvate, water dikinase] + ADP = [pyruvate, water dikinase]-phosphate + AMP + H(+). It catalyses the reaction [pyruvate, water dikinase]-phosphate + phosphate + H(+) = [pyruvate, water dikinase] + diphosphate. Functionally, bifunctional serine/threonine kinase and phosphorylase involved in the regulation of the phosphoenolpyruvate synthase (PEPS) by catalyzing its phosphorylation/dephosphorylation. The sequence is that of Putative phosphoenolpyruvate synthase regulatory protein from Cronobacter sakazakii (strain ATCC BAA-894) (Enterobacter sakazakii).